Reading from the N-terminus, the 338-residue chain is NAC domain-containing protein 46 (338 aa).

Residues 20 to 171 form the NAC domain; that stretch reads LPPGFRFHPT…EWVVCRVFHK (152 aa). A DNA-binding region spans residues 118-177; the sequence is VGMKKTLVFYTGRAPKGEKTNWVMHEYRLDGKYSYHNLPKTARDEWVVCRVFHKNAPSTT.

As to quaternary structure, interacts with RCD1.

The protein resides in the nucleus. In terms of biological role, transcriptional activator that acts as a positive regulator of leaf senescence. Activates NYC1, SGR1, SGR2 and PAO, which are genes involved in chlorophyll catabolic processes. Activates senescence-associated genes, such as RNS1, SAG12 and SAG13. In Arabidopsis thaliana (Mouse-ear cress), this protein is NAC domain-containing protein 46.